Reading from the N-terminus, the 389-residue chain is MANQISQHLQVALVAGETSGDLLAGLLLDGLREQWPLMTAVGIGGPQMARRGLVAWWGHDKLSVHGFGWEVLRRYREIVGIRRQLKTRLLRQQPDVFIGVDAPDFNLDLEQDLKAQGIKTVHFVSPSIWAWRPERVEKIRRSVDHVLCIFPFEPALLARHGIAATYVGHPLANVIPMEPDRSAARAALGLADGDQVVAILPGSRQSEINHLALRFFQAAALINKAHPAIKFIVPAIPALRAGIEHAARASGMQAHLQIIAGQSHTVLAACDVTLIASGTATLEAALFKRPMVIAYRMGWLSWQIMRRKQLQPWVGLPNILCQDFVVPELLQDAATAQALADAVLLWIDAKASHPAKIAALQQKFTALHTELQRDTPRLAAHAIQQVLQG.

Belongs to the LpxB family.

The enzyme catalyses a lipid X + a UDP-2-N,3-O-bis[(3R)-3-hydroxyacyl]-alpha-D-glucosamine = a lipid A disaccharide + UDP + H(+). Its pathway is bacterial outer membrane biogenesis; LPS lipid A biosynthesis. Its function is as follows. Condensation of UDP-2,3-diacylglucosamine and 2,3-diacylglucosamine-1-phosphate to form lipid A disaccharide, a precursor of lipid A, a phosphorylated glycolipid that anchors the lipopolysaccharide to the outer membrane of the cell. This chain is Lipid-A-disaccharide synthase, found in Albidiferax ferrireducens (strain ATCC BAA-621 / DSM 15236 / T118) (Rhodoferax ferrireducens).